The following is a 308-amino-acid chain: tRNA pseudouridine synthase B (308 aa).

The active-site Nucleophile is the D47.

The protein belongs to the pseudouridine synthase TruB family. Type 1 subfamily.

The enzyme catalyses uridine(55) in tRNA = pseudouridine(55) in tRNA. Its function is as follows. Responsible for synthesis of pseudouridine from uracil-55 in the psi GC loop of transfer RNAs. The sequence is that of tRNA pseudouridine synthase B from Xanthomonas oryzae pv. oryzae (strain MAFF 311018).